A 380-amino-acid polypeptide reads, in one-letter code: Opsin-2 (380 aa).

The Extracellular segment spans residues 1–51; sequence MVNTTDFYPVPAAMAYESSVGLPLLGWNVPTEHLDLVHPHWRSFQVPNKYW. N-linked (GlcNAc...) asparagine glycosylation occurs at Asn3. Residues 52 to 76 traverse the membrane as a helical segment; that stretch reads HFGLAFVYFMLMCMSSLGNGIVLWI. Over 77-88 the chain is Cytoplasmic; it reads YATTKSIRTPSN. The helical transmembrane segment at 89–115 threads the bilayer; the sequence is MFIVNLALFDVLMLLEMPMLVVSSLFY. Topologically, residues 116-128 are extracellular; the sequence is QRPVGWELGCDIY. Cys125 and Cys202 are disulfide-bonded. Residues 129 to 148 form a helical membrane-spanning segment; it reads AALGSVAGIGSAINNAAIAF. Residues 149–166 are Cytoplasmic-facing; the sequence is DRYRTISCPIDGRLTQGQ. The helical transmembrane segment at 167-191 threads the bilayer; it reads VLALIAGTWVWTLPFTLMPLLRIWS. Residues 192–215 are Extracellular-facing; it reads RFTAEGFLTTCSFDYLTDDEDTKV. Residues 216-243 traverse the membrane as a helical segment; that stretch reads FVGCIFAWSYAFPLCLICCFYYRLIGAV. Over 244–279 the chain is Cytoplasmic; that stretch reads REHEKMLRDQAKKMNVKSLQSNADTEAQSAEIRIAK. The chain crosses the membrane as a helical span at residues 280 to 303; the sequence is VALTIFFLFLCSWTPYAVVAMIGA. Residues 304-311 are Extracellular-facing; it reads FGNRAALT. Residues 312-336 traverse the membrane as a helical segment; the sequence is PLSTMIPAVTAKIVSCIDPWVYAIN. Lys323 is subject to N6-(retinylidene)lysine. Over 337-380 the chain is Cytoplasmic; the sequence is HPRFRAEVQKRMKWLHLGEDARSSKSDTSSTATDRTVGNVSASA. The disordered stretch occupies residues 358 to 380; that stretch reads RSSKSDTSSTATDRTVGNVSASA. Residues 362–372 are compositionally biased toward low complexity; it reads SDTSSTATDRT.

The protein belongs to the G-protein coupled receptor 1 family. Opsin subfamily. Phosphorylated on some or all of the serine and threonine residues present in the C-terminal region.

The protein resides in the membrane. Visual pigments are the light-absorbing molecules that mediate vision. They consist of an apoprotein, opsin, covalently linked to cis-retinal. This Schistocerca gregaria (Desert locust) protein is Opsin-2 (Lo2).